The chain runs to 335 residues: Anthranilate phosphoribosyltransferase (335 aa).

5-phospho-alpha-D-ribose 1-diphosphate is bound by residues Gly79, 82-83 (GD), Ser87, 89-92 (NIST), 107-115 (KHGNRSISS), and Ser119. Gly79 lines the anthranilate pocket. Ser91 contacts Mg(2+). Asn110 serves as a coordination point for anthranilate. Position 165 (Arg165) interacts with anthranilate. The Mg(2+) site is built by Asp224 and Glu225.

It belongs to the anthranilate phosphoribosyltransferase family. Homodimer. Requires Mg(2+) as cofactor.

It carries out the reaction N-(5-phospho-beta-D-ribosyl)anthranilate + diphosphate = 5-phospho-alpha-D-ribose 1-diphosphate + anthranilate. The protein operates within amino-acid biosynthesis; L-tryptophan biosynthesis; L-tryptophan from chorismate: step 2/5. Catalyzes the transfer of the phosphoribosyl group of 5-phosphorylribose-1-pyrophosphate (PRPP) to anthranilate to yield N-(5'-phosphoribosyl)-anthranilate (PRA). This is Anthranilate phosphoribosyltransferase from Streptococcus mutans serotype c (strain ATCC 700610 / UA159).